Here is a 168-residue protein sequence, read N- to C-terminus: Phosphopantetheine adenylyltransferase (168 aa).

A substrate-binding site is contributed by S9. ATP contacts are provided by residues 9–10 and H17; that span reads SF. Substrate-binding residues include K41, L73, and R87. ATP contacts are provided by residues 88 to 90, E98, and 123 to 129; these read GMR and WIYTSSS.

Belongs to the bacterial CoaD family. In terms of assembly, homohexamer. The cofactor is Mg(2+).

The protein resides in the cytoplasm. It carries out the reaction (R)-4'-phosphopantetheine + ATP + H(+) = 3'-dephospho-CoA + diphosphate. It participates in cofactor biosynthesis; coenzyme A biosynthesis; CoA from (R)-pantothenate: step 4/5. Functionally, reversibly transfers an adenylyl group from ATP to 4'-phosphopantetheine, yielding dephospho-CoA (dPCoA) and pyrophosphate. The chain is Phosphopantetheine adenylyltransferase from Desulfosudis oleivorans (strain DSM 6200 / JCM 39069 / Hxd3) (Desulfococcus oleovorans).